The primary structure comprises 4576 residues: Mucin-2 (4576 aa).

An N-terminal signal peptide occupies residues 1–20; sequence MGLPLARLVAACLVLALAKG. Serine 21 carries the phosphoserine modification. Residues 32–205 enclose the VWFD 1 domain; the sequence is HVCSTWGDFH…KINKPEVQCE (174 aa). 29 cysteine pairs are disulfide-bonded: cysteine 34/cysteine 166, cysteine 56/cysteine 204, cysteine 64/cysteine 163, cysteine 216/cysteine 253, cysteine 223/cysteine 248, cysteine 235/cysteine 273, cysteine 255/cysteine 261, cysteine 263/cysteine 289, cysteine 293/cysteine 327, cysteine 306/cysteine 319, cysteine 310/cysteine 349, cysteine 329/cysteine 343, cysteine 351/cysteine 373, cysteine 368/cysteine 385, cysteine 371/cysteine 380, cysteine 389/cysteine 526, cysteine 411/cysteine 561, cysteine 433/cysteine 441, cysteine 572/cysteine 617, cysteine 586/cysteine 612, cysteine 599/cysteine 637, cysteine 619/cysteine 625, cysteine 627/cysteine 652, cysteine 659/cysteine 696, cysteine 672/cysteine 686, cysteine 676/cysteine 716, cysteine 698/cysteine 710, cysteine 718/cysteine 740, and cysteine 738/cysteine 747. A Ca(2+)-binding site is contributed by aspartate 46. Cu(+) contacts are provided by methionine 143 and methionine 151. Residue glutamate 153 participates in Cu(2+) binding. Asparagine 160 is a glycosylation site (N-linked (GlcNAc...) asparagine). Residues aspartate 168, asparagine 170, and glutamate 177 each coordinate Ca(2+). Histidine 275 contributes to the Cu(2+) binding site. In terms of domain architecture, TIL spans 293–349; the sequence is CPNNMVYLESSSPCVDTCSHLEVSSLCEEHYMDGCFCPEGTVYDDITGSGCIPVSQC. Histidine 322 provides a ligand contact to Cu(2+). Cu(+) is bound at residue methionine 324. Residues 387–562 form the VWFD 2 domain; the sequence is ETCALEGGSH…NTWKAQSSCH (176 aa). Residue aspartate 401 participates in Ca(2+) binding. An N-linked (GlcNAc...) asparagine glycan is attached at asparagine 421. Residues asparagine 528, asparagine 530, leucine 532, aspartate 535, and aspartate 536 each contribute to the Ca(2+) site. Asparagine 668 is a glycosylation site (N-linked (GlcNAc...) asparagine). A glycan (N-linked (GlcNAc...) asparagine) is linked at asparagine 768. Disulfide bonds link cysteine 782-cysteine 818, cysteine 800-cysteine 812, cysteine 820-cysteine 843, cysteine 837-cysteine 855, cysteine 841-cysteine 850, cysteine 859-cysteine 990, cysteine 881-cysteine 1025, cysteine 890-cysteine 987, cysteine 907-cysteine 914, cysteine 1035-cysteine 1078, cysteine 1049-cysteine 1073, cysteine 1060-cysteine 1100, cysteine 1080-cysteine 1088, cysteine 1090-cysteine 1115, cysteine 1106-cysteine 1135, cysteine 1119-cysteine 1161, cysteine 1143-cysteine 1185, cysteine 1165-cysteine 1179, cysteine 1187-cysteine 1211, cysteine 1206-cysteine 1236, and cysteine 1209-cysteine 1219. An N-linked (GlcNAc...) asparagine glycan is attached at asparagine 838. Residues 857–1026 form the VWFD 3 domain; the sequence is STCSIYGSGH…NSWKEASTCP (170 aa). Aspartate 871 contributes to the Ca(2+) binding site. N-linked (GlcNAc...) asparagine glycosylation is present at asparagine 893. Residues asparagine 992, aspartate 994, asparagine 999, and aspartate 1000 each contribute to the Ca(2+) site. N-linked (GlcNAc...) asparagine glycosylation is found at asparagine 1137 and asparagine 1152. Asparagine 1213, asparagine 1228, and asparagine 1244 each carry an N-linked (GlcNAc...) asparagine glycan. O-linked (GalNAc) threonine glycans are attached at residues threonine 1265, threonine 1268, threonine 1269, threonine 1281, and threonine 1292. Ca(2+) is bound by residues asparagine 1305, histidine 1308, glycine 1315, aspartate 1316, and glutamate 1318. The N-linked (GlcNAc...) asparagine glycan is linked to asparagine 1352. Ca(2+)-binding residues include aspartate 1375 and tyrosine 1376. 5 repeat units span residues 1395-1415, 1416-1427, 1428-1437, 1438-1453, and 1454-1460. The tract at residues 1395–2866 is disordered; it reads SPTTSTTTLS…PTTSSTFTTP (1472 aa). One copy of the 7B repeat lies at 1478-1497; that stretch reads PSTTSPTTPSTTPSTTSPTT. One copy of the 8A repeat lies at 1498-1510; sequence PSTTSPTTPTSTS. A 9B repeat occupies 1530-1556; sequence SPTTSPTTPSTTSPTISTTTSTISPTT. The 10A repeat unit spans residues 1557 to 1572; it reads PSTTSPNTPSTTSSTI. The 10B repeat unit spans residues 1573-1588; the sequence is PSTTSPTTPSTTSPTI. Residues 1589–1607 form an 11A repeat; the sequence is STTTSTTSPTTPSTTSPTT. The 11B repeat unit spans residues 1608-1634; that stretch reads PSTTSPTTPSTTSPTISTTTLTTSPTT. 2 tandem repeats follow at residues 1635–1642 and 1665–1681. N-linked (GlcNAc...) asparagine glycosylation is found at asparagine 2529 and asparagine 2910. 2 stretches are compositionally biased toward low complexity: residues 2975 to 3623 and 3631 to 3706; these read PSST…GSTP and PGPT…TSPS. The tract at residues 2975-3706 is disordered; sequence PSSTTTETPT…SSTSPITSPS (732 aa). Asparagine 3734, asparagine 3745, and asparagine 3756 each carry an N-linked (GlcNAc...) asparagine glycan. A compositionally biased stretch (pro residues) spans 3764-3774; the sequence is STPTPSTPTPT. The interval 3764–3806 is disordered; that stretch reads STPTPSTPTPTPSQTTTPSTTSSKSTPSTPQSTSPKSTLSTPT. Low complexity predominate over residues 3775 to 3806; the sequence is PSQTTTPSTTSSKSTPSTPQSTSPKSTLSTPT. Residues asparagine 3823, asparagine 3830, and asparagine 3903 are each glycosylated (N-linked (GlcNAc...) asparagine). The region spanning 3880-4063 is the VWFD 4 domain; that stretch reads CYCTGWGDPH…VNDPSKPHCP (184 aa). 3 cysteine pairs are disulfide-bonded: cysteine 3882-cysteine 4023, cysteine 3904-cysteine 4062, and cysteine 3928-cysteine 3936. N-linked (GlcNAc...) asparagine glycosylation is found at asparagine 3991, asparagine 4017, asparagine 4028, asparagine 4083, asparagine 4149, asparagine 4183, asparagine 4254, asparagine 4277, asparagine 4351, asparagine 4366, asparagine 4434, asparagine 4465, and asparagine 4488. 2 VWFC domains span residues 4213-4282 and 4320-4387; these read CVGP…TSCK and GVCV…KKCQ. Disulfide bonds link cysteine 4471–cysteine 4518, cysteine 4485–cysteine 4532, cysteine 4494–cysteine 4548, and cysteine 4498–cysteine 4550. One can recognise a CTCK domain in the interval 4471–4556; sequence CSAVSVMKEI…SCLCQDTVCG (86 aa).

In terms of assembly, homomultimer; disulfide-linked. The N- and C-terminus mediate their assembly into higher order structures to form filaments. The CTCK domains of two polypeptides associate in the endoplasmic reticulum to generate intermolecularly disulfide-bonded dimers. These dimers progress to the Golgi apparatus, which is a more acidic environment than the endoplasmic reticulum. Under acidic conditions, the N-termini form non-covalent intermolecular interactions that juxtapose assemblies of the third VWD domain (VWD3) from different CTCK-linked dimers. The VWD3 assemblies then become disulfide bonded to one another to produce long, disulfide-linked polymers that remain highly compact until secretion. Interacts with FCGBP. Interacts with AGR2; disulfide-linked. In terms of processing, O-glycosylated. O-glycosylation is required for mucin assembly. Goblet cells synthesize two forms of mucin that differ in branched chain O-glycosylation and the site of production in the colon. May undergo proteolytic cleavage in the outer mucus layer of the colon, contributing to the expanded volume and loose nature of this layer which allows for bacterial colonization in contrast to the inner mucus layer which is dense and devoid of bacteria. Post-translationally, at low pH of 6 and under, undergoes autocatalytic cleavage in vitro in the N-terminal region of the fourth VWD domain. It is likely that this also occurs in vivo and is triggered by the low pH of the late secretory pathway. Highly expressed in goblet cells of the colon with lower levels in the small intestine and no expression in the stomach (at protein level).

Its subcellular location is the secreted. Coats the epithelia of the intestines and other mucus membrane-containing organs to provide a protective, lubricating barrier against particles and infectious agents at mucosal surfaces. Major constituent of the colon mucus, which is mainly formed by large polymeric networks of MUC2 secreted by goblet cells that cover the exposed surfaces of intestine. MUC2 networks form hydrogels that guard the underlying epithelium from pathogens and other hazardous matter entering from the outside world, while permitting nutrient absorption and gas exchange. Acts as a divalent copper chaperone that protects intestinal cells from copper toxicity and facilitates nutritional copper unptake into cells. Binds both Cu(2+) and its reduced form, Cu(1+), at two juxtaposed binding sites: Cu(2+), once reduced to Cu(1+) by vitamin C (ascorbate) or other dietary antioxidants, transits to the other binding site. MUC2-bound Cu(1+) is protected from oxidation in aerobic environments, and can be released for nutritional delivery to cells. Mucin gels store antimicrobial molecules that participate in innate immunity. Mucin glycoproteins also house and feed the microbiome, lubricate tissue surfaces, and may facilitate the removal of contaminants and waste products from the body. Goblet cells synthesize two forms of MUC2 mucin that differ in branched chain O-glycosylation and the site of production in the colon: a (1) 'thick' mucus that wraps the microbiota to form fecal pellets is produced in the proximal, ascending colon. 'Thick' mucus transits along the descending colon and is lubricated by a (2) 'thin' MUC2 mucus produced in the distal colon which adheres to the 'thick' mucus. The chain is Mucin-2 from Mus musculus (Mouse).